A 430-amino-acid polypeptide reads, in one-letter code: UDP-glucose 6-dehydrogenase AglM (430 aa).

Cys-269 is a catalytic residue.

Belongs to the UDP-glucose/GDP-mannose dehydrogenase family.

It carries out the reaction UDP-alpha-D-glucose + 2 NAD(+) + H2O = UDP-alpha-D-glucuronate + 2 NADH + 3 H(+). It participates in nucleotide-sugar biosynthesis; UDP-alpha-D-glucuronate biosynthesis; UDP-alpha-D-glucuronate from UDP-alpha-D-glucose: step 1/1. Its pathway is cell surface structure biogenesis; S-layer biogenesis. Its activity is regulated as follows. Activity improves as salinity decreases. In terms of biological role, involved in the assembly of a N-linked pentasaccharide that decorates the S-layer glycoprotein and flagellins. Involved in the biosynthesis of the hexuronic acids found at both positions 2 and 3 of the pentasaccharide. The chain is UDP-glucose 6-dehydrogenase AglM (aglM) from Haloferax volcanii (strain ATCC 29605 / DSM 3757 / JCM 8879 / NBRC 14742 / NCIMB 2012 / VKM B-1768 / DS2) (Halobacterium volcanii).